The sequence spans 392 residues: Elongation factor Tu (392 aa).

The 193-residue stretch at 10–202 folds into the tr-type G domain; it reads KVHVNVGTIG…VLDEYIEDPI (193 aa). The interval 19–26 is G1; that stretch reads GHVDHGKT. Residue 19–26 participates in GTP binding; the sequence is GHVDHGKT. Thr26 contacts Mg(2+). The interval 60–64 is G2; it reads GITIN. A G3 region spans residues 81-84; that stretch reads DCPG. GTP contacts are provided by residues 81–85 and 136–139; these read DCPGH and NKCD. The G4 stretch occupies residues 136 to 139; the sequence is NKCD. The interval 174-176 is G5; it reads SAL.

The protein belongs to the TRAFAC class translation factor GTPase superfamily. Classic translation factor GTPase family. EF-Tu/EF-1A subfamily. As to quaternary structure, monomer.

It localises to the cytoplasm. The catalysed reaction is GTP + H2O = GDP + phosphate + H(+). In terms of biological role, GTP hydrolase that promotes the GTP-dependent binding of aminoacyl-tRNA to the A-site of ribosomes during protein biosynthesis. This chain is Elongation factor Tu, found in Phytoplasma mali (strain AT).